We begin with the raw amino-acid sequence, 707 residues long: Integrator complex subunit 13 (707 aa).

Over residues 565-625 (PPEEEERKKR…AEAEVIKDSP (61 aa)) the composition is skewed to basic and acidic residues. The tract at residues 565–651 (PPEEEERKKR…TGPAEKSKGP (87 aa)) is disordered. The stretch at 567 to 622 (EEEERKKRGRKREDKEEKAEKPPKENEHEKKWQESERVKSVLDREKEDLAEAEVIK) forms a coiled coil. Residues 573-583 (KRGRKREDKEE) carry the Nuclear localization signal (NLS) motif. A cleavage module binding motif (CMBM) region spans residues 650–695 (GPMSLLSLWSSRINTANSRKHQEFVGRLNSVNNKAELYQHLKEENG).

This sequence belongs to the Integrator subunit 13 family. As to quaternary structure, component of the Integrator complex, composed of core subunits INTS1, INTS2, INTS3, INTS4, INTS5, INTS6, INTS7, INTS8, INTS9/RC74, INTS10, INTS11/CPSF3L, INTS12, INTS13, INTS14 and INTS15. The core complex associates with protein phosphatase 2A subunits PPP2CA and PPP2R1A, to form the Integrator-PP2A (INTAC) complex. INTS13 is part of the tail subcomplex, composed of INTS10, INTS13, INTS14 and INTS15.

Its subcellular location is the nucleus. The protein localises to the cytoplasm. Component of the integrator complex, a multiprotein complex that terminates RNA polymerase II (Pol II) transcription in the promoter-proximal region of genes. The integrator complex provides a quality checkpoint during transcription elongation by driving premature transcription termination of transcripts that are unfavorably configured for transcriptional elongation: the complex terminates transcription by (1) catalyzing dephosphorylation of the C-terminal domain (CTD) of Pol II subunit POLR2A/RPB1 and SUPT5H/SPT5, (2) degrading the exiting nascent RNA transcript via endonuclease activity and (3) promoting the release of Pol II from bound DNA. The integrator complex is also involved in terminating the synthesis of non-coding Pol II transcripts, such as enhancer RNAs (eRNAs), small nuclear RNAs (snRNAs), telomerase RNAs and long non-coding RNAs (lncRNAs). Within the integrator complex, INTS13 is part of the integrator tail module and acts as a platform for the recruitment of transcription factors at promoters. The chain is Integrator complex subunit 13 from Xenopus tropicalis (Western clawed frog).